A 1394-amino-acid polypeptide reads, in one-letter code: Tubulin glycylase 3E (1394 aa).

4 disordered regions span residues 201–230 (KKKS…QRKE), 563–582 (NQKD…QNSI), 620–663 (DENE…TSNF), and 682–706 (STVK…NLKE). The span at 205–216 (NFQNKSQSQLNN) shows a compositional bias: low complexity. The segment covering 217 to 230 (HKNEEKKPSQQRKE) has biased composition (basic and acidic residues). Over residues 568–582 (QSNQTSSVISQQNSI) the composition is skewed to low complexity. Residues 627 to 655 (KENVLQQKKNQSNQIVTSQQQSNNYFKQE) show a composition bias toward polar residues. Low complexity predominate over residues 682 to 703 (STVKNSDNNNQNQTNPQNQNTN). Residues 911–1250 (RFIFNITVIA…QNNLQEDLEI (340 aa)) enclose the TTL domain. Residues 1058–1061 (QKYI), Lys1079, and Asp1081 each bind ATP. 2 IQ domains span residues 1320-1349 (QYWG…QKFT) and 1348-1377 (FTFA…QQQT).

It is found in the cell projection. Its subcellular location is the cilium. The protein localises to the cytoplasm. It localises to the cytoskeleton. The protein resides in the cilium axoneme. Probable glycylase which modifies tubulin, generating side chains of glycine on the gamma-carboxyl groups of specific glutamate residues within the C-terminal tail of tubulin. The chain is Tubulin glycylase 3E (TTLL3E) from Tetrahymena thermophila (strain SB210).